The primary structure comprises 641 residues: SUMO-activating enzyme subunit 2-A (641 aa).

ATP-binding positions include 24 to 29 (GAGGIG), Asp-48, 56 to 59 (NLNR), Lys-72, 95 to 96 (SI), and 117 to 122 (DNNAAR). Residues Cys-158 and Cys-161 each contribute to the Zn(2+) site. Cys-173 functions as the Glycyl thioester intermediate in the catalytic mechanism. The Zn(2+) site is built by Cys-439 and Cys-442. Residues 546 to 641 (GDVPEKGPQK…EEDDDIIALD (96 aa)) are disordered. Positions 548–561 (VPEKGPQKPPEESV) are enriched in basic and acidic residues. Residues 562–579 (KNITNGSDDGAQPSTSKA) are compositionally biased toward polar residues. Acidic residues-rich tracts occupy residues 582–594 (QDDV…DEES) and 630–641 (PVEEDDDIIALD).

The protein belongs to the ubiquitin-activating E1 family. As to quaternary structure, heterodimer of sae1 and uba2/sae2. The heterodimer corresponds to the two domains that are encoded on a single polypeptide chain in ubiquitin-activating enzyme E1. Interacts with ube2i.

The protein resides in the nucleus. It functions in the pathway protein modification; protein sumoylation. In terms of biological role, the heterodimer acts as an E1 ligase for sumo1, sumo2, and sumo3. It mediates ATP-dependent activation of sumo proteins followed by formation of a thioester bond between a sumo protein and a conserved active site cysteine residue on uba2/sae2. In Xenopus laevis (African clawed frog), this protein is SUMO-activating enzyme subunit 2-A (uba2-a).